Reading from the N-terminus, the 362-residue chain is MNTPLKPKHGQKTNRKPKANKPVVKKQQTKQPPTHKVQGEEVAAVKSGLHPRNRHRGQYDFPALIKVVPELQSHVMKNPKGQWTINFADPISVKLLNKALLVLHYGVTYWDIPEGFLCPPIPGRADYIHRVADLLLKGNPQLNHSQVRALDIGVGANCIYPIVGVTEYGWSWVGSDVDPVSIQQASLIVQSNSKLQGHIECRLQKNSQHIFNGIIGANERYTVTTCNPPFHASLADAQQGTQRKLTNLQANQRKKGRLATPTLSHSRLNFGGQKAELWCPGGEAAFIGKMAVESQQFAQQVLWFSTLISKGDNVRGMKKQLEKLGAQSIHVIEMAQGQKISRFIAWSFQNAEQRKLWWQAKC.

A compositionally biased stretch (basic residues) spans 1–28 (MNTPLKPKHGQKTNRKPKANKPVVKKQQ). Residues 1–40 (MNTPLKPKHGQKTNRKPKANKPVVKKQQTKQPPTHKVQGE) are disordered.

Belongs to the methyltransferase superfamily. METTL16/RlmF family.

Its subcellular location is the cytoplasm. The enzyme catalyses adenosine(1618) in 23S rRNA + S-adenosyl-L-methionine = N(6)-methyladenosine(1618) in 23S rRNA + S-adenosyl-L-homocysteine + H(+). Specifically methylates the adenine in position 1618 of 23S rRNA. This chain is Ribosomal RNA large subunit methyltransferase F, found in Vibrio cholerae serotype O1 (strain M66-2).